Reading from the N-terminus, the 101-residue chain is Small ribosomal subunit protein bS18c (101 aa).

It belongs to the bacterial ribosomal protein bS18 family. Part of the 30S ribosomal subunit.

The protein localises to the plastid. Its subcellular location is the chloroplast. In Arabidopsis thaliana (Mouse-ear cress), this protein is Small ribosomal subunit protein bS18c (rps18).